The primary structure comprises 207 residues: Galactoside O-acetyltransferase (207 aa).

Asparagine 87 contributes to the acetyl-CoA binding site. Histidine 117 serves as the catalytic Proton donor/acceptor. Residues alanine 144, alanine 162, 167 to 168 (TK), and arginine 185 each bind acetyl-CoA.

This sequence belongs to the transferase hexapeptide repeat family. In terms of assembly, homotrimer.

It localises to the cytoplasm. It catalyses the reaction a beta-D-galactoside + acetyl-CoA = a 6-acetyl-beta-D-galactoside + CoA. This chain is Galactoside O-acetyltransferase (lacA), found in Lactococcus lactis subsp. lactis (strain IL1403) (Streptococcus lactis).